Here is a 206-residue protein sequence, read N- to C-terminus: Protein Nef (206 aa).

Gly-2 carries N-myristoyl glycine; by host lipidation. Ser-6 is modified (phosphoserine; by host). Residues 62 to 65 (EEEE) are acidic; interacts with host PACS1 and PACS2; stabilizes the interaction of NEF/MHC-I with host AP1M1; necessary for MHC-I internalization. The tract at residues 69–78 (PVTPQVPLRP) is SH3-binding; interaction with Src family tyrosine kinases. The PxxP; stabilizes the interaction of NEF/MHC-I with host AP1M1; necessary for MHC-I internalization signature appears at 72-75 (PQVP). The mediates dimerization, Nef-PTE1 interaction stretch occupies residues 108–124 (DILDLWIYHTQGYFPDW). Positions 108 to 124 (DILDLWIYHTQGYFPDW) are mediates dimerization, Nef-PTE1 interaction, Nef-induced CD4 and MHC-I down-regulation and enhancement of infectivity. The tract at residues 148 to 180 (VEPDKVEEANKGENTSLLHPVSLHGMDDPEREV) is binding to ATP6V1H. A Dileucine internalization motif; necessary for CD4 internalization motif is present at residues 164–165 (LL). The Diacidic; necessary for CD4 internalization motif lies at 174-175 (DD).

This sequence belongs to the lentivirus primate group Nef protein family. Monomer; cytosolic form. Homodimer; membrane bound form. Interacts with Nef associated p21-activated kinase (PAK2); this interaction activates PAK2. Associates with the Nef-MHC-I-AP1 complex; this complex is required for MHC-I internalization. Interacts (via C-terminus) with host PI3-kinase. Interacts with host PACS1; this interaction seems to be weak. Interacts with host PACS2. Interacts with host LCK and MAPK3; these interactions inhibit the kinase activity of the latter. Interacts with host ATP6V1H; this interaction may play a role in CD4 endocytosis. Associates with the CD4-Nef-AP2 complex; this complex is required for CD4 internalization. Interacts with host AP2 subunit alpha and AP2 subunit sigma2. Interacts with TCR-zeta chain; this interaction up-regulates the Fas ligand (FasL) surface expression. Interacts with host HCK, LYN, and SRC; these interactions activate the Src family kinases. Interacts with MAP3K5; this interaction inhibits the Fas and TNFR-mediated death signals. Interacts with beta-COP and PTE1. Interacts with human RACK1; this increases Nef phosphorylation by PKC. Interacts with TP53; this interaction decreases the half-life of TP53, protecting the infected cell against p53-mediated apoptosis. Post-translationally, the virion-associated Nef proteins are cleaved by the viral protease to release the soluble C-terminal core protein. Nef is probably cleaved concomitantly with viral structural proteins on maturation of virus particles. In terms of processing, myristoylated. Phosphorylated on serine residues, probably by host PKCdelta and theta.

It is found in the host cell membrane. The protein localises to the virion. The protein resides in the secreted. It localises to the host Golgi apparatus membrane. Functionally, factor of infectivity and pathogenicity, required for optimal virus replication. Alters numerous pathways of T-lymphocytes function and down-regulates immunity surface molecules in order to evade host defense and increase viral infectivity. Alters the functionality of other immunity cells, like dendritic cells, monocytes/macrophages and NK cells. In infected CD4(+) T-lymphocytes, down-regulates the surface MHC-I, mature MHC-II, CD4, CD28, CCR5 and CXCR4 molecules. Mediates internalization and degradation of host CD4 through the interaction of with the cytoplasmic tail of CD4, the recruitment of AP-2 (clathrin adapter protein complex 2), internalization through clathrin coated pits, and subsequent transport to endosomes and lysosomes for degradation. Diverts host MHC-I molecules to the trans-Golgi network-associated endosomal compartments by an endocytic pathway to finally target them for degradation. MHC-I down-regulation may involve AP-1 (clathrin adapter protein complex 1) or possibly Src family kinase-ZAP70/Syk-PI3K cascade recruited by PACS2. In consequence infected cells are masked for immune recognition by cytotoxic T-lymphocytes. Decreasing the number of immune receptors also prevents reinfection by more HIV particles (superinfection). Down-regulates host SERINC3 and SERINC5 thereby excluding these proteins from the viral particles. Virion infectivity is drastically higher when SERINC3 or SERINC5 are excluded from the viral envelope, because these host antiviral proteins impair the membrane fusion event necessary for subsequent virion penetration. In terms of biological role, bypasses host T-cell signaling by inducing a transcriptional program nearly identical to that of anti-CD3 cell activation. Interaction with TCR-zeta chain up-regulates the Fas ligand (FasL). Increasing surface FasL molecules and decreasing surface MHC-I molecules on infected CD4(+) cells send attacking cytotoxic CD8+ T-lymphocytes into apoptosis. Its function is as follows. Plays a role in optimizing the host cell environment for viral replication without causing cell death by apoptosis. Protects the infected cells from apoptosis in order to keep them alive until the next virus generation is ready to strike. Inhibits the Fas and TNFR-mediated death signals by blocking MAP3K5/ASK1. Decreases the half-life of TP53, protecting the infected cell against p53-mediated apoptosis. Inhibits the apoptotic signals regulated by the Bcl-2 family proteins through the formation of a Nef/PI3-kinase/PAK2 complex that leads to activation of PAK2 and induces phosphorylation of host BAD. Functionally, extracellular Nef protein targets CD4(+) T-lymphocytes for apoptosis by interacting with CXCR4 surface receptors. The chain is Protein Nef from Homo sapiens (Human).